Consider the following 614-residue polypeptide: Probable LRR receptor-like serine/threonine-protein kinase At5g63710 (614 aa).

The signal sequence occupies residues 1-50; sequence MAHSGNGESFHDPLRGFIQRNCFRWNNQKLILQCFMALAFVGITSSTTQP. At 51–224 the chain is on the extracellular side; sequence DIEGGALLQL…VTSSKKKLRD (174 aa). 4 N-linked (GlcNAc...) asparagine glycosylation sites follow: Asn-65, Asn-125, Asn-146, and Asn-175. LRR repeat units follow at residues 115 to 139, 141 to 163, and 164 to 187; these read LKFLVTLELQNNSLSGALPDSLGNM, NLQTLNLSVNSFSGSIPASWSQL, and SNLKHLDLSSNNLTGSIPTQFFSI. The chain crosses the membrane as a helical span at residues 225-245; sequence ITLTASCVASIILFLGAMVMY. Topologically, residues 246–613 are cytoplasmic; the sequence is HHHRVRRTKY…DQESIRLSTA (368 aa). Position 286 is a phosphothreonine (Thr-286). The 285-residue stretch at 289-573 folds into the Protein kinase domain; that stretch reads FNESNLIGQG…GTGGLAEKWT (285 aa). 295 to 303 is a binding site for ATP; the sequence is IGQGGFGKV. Position 312 is a phosphothreonine (Thr-312). Lys-317 is an ATP binding site. A Phosphoserine modification is found at Ser-370. Residue Thr-389 is modified to Phosphothreonine. The Proton acceptor role is filled by Asp-416. Phosphothreonine is present on residues Thr-449, Thr-450, and Thr-455. A Phosphotyrosine modification is found at Tyr-463. Thr-466 is modified (phosphothreonine). Position 470 is a phosphoserine (Ser-470). Thr-545 carries the post-translational modification Phosphothreonine.

The protein belongs to the protein kinase superfamily. Ser/Thr protein kinase family.

The protein localises to the cell membrane. The catalysed reaction is L-seryl-[protein] + ATP = O-phospho-L-seryl-[protein] + ADP + H(+). It catalyses the reaction L-threonyl-[protein] + ATP = O-phospho-L-threonyl-[protein] + ADP + H(+). This is Probable LRR receptor-like serine/threonine-protein kinase At5g63710 from Arabidopsis thaliana (Mouse-ear cress).